The sequence spans 139 residues: D-ribose pyranase (139 aa).

Residue H20 is the Proton donor of the active site. Residues D28, H106, and 128 to 130 each bind substrate; that span reads YAN.

The protein belongs to the RbsD / FucU family. RbsD subfamily. In terms of assembly, homodecamer.

It is found in the cytoplasm. It catalyses the reaction beta-D-ribopyranose = beta-D-ribofuranose. It functions in the pathway carbohydrate metabolism; D-ribose degradation; D-ribose 5-phosphate from beta-D-ribopyranose: step 1/2. Catalyzes the interconversion of beta-pyran and beta-furan forms of D-ribose. The protein is D-ribose pyranase of Vibrio cholerae serotype O1 (strain ATCC 39541 / Classical Ogawa 395 / O395).